The following is a 67-amino-acid chain: Ferredoxin FdxE (67 aa).

[3Fe-4S] cluster contacts are provided by Cys-10, Val-11, Gln-15, Cys-16, and Cys-54.

Interacts with the cytochrome P450 143 with high affinity (Kd=84 nM). Requires [3Fe-4S] cluster as cofactor.

Its function is as follows. Ferredoxin that is the redox partner of cytochrome CYP143, a cytochrome P450 encoded by an adjacent gene. This is Ferredoxin FdxE from Mycobacterium tuberculosis (strain ATCC 25618 / H37Rv).